The primary structure comprises 128 residues: UPF0325 protein YaeH (128 aa).

It belongs to the UPF0325 family.

In Salmonella agona (strain SL483), this protein is UPF0325 protein YaeH.